A 366-amino-acid polypeptide reads, in one-letter code: Phospho-N-acetylmuramoyl-pentapeptide-transferase (366 aa).

The next 10 membrane-spanning stretches (helical) occupy residues 3-23 (QIIISGSVAFLVSIFLTPILI), 55-75 (IAIIAGITIGYLVTNIYSYFA), 80-100 (FTASGLLVLGLMLGLGATGFA), 118-138 (AKLISQLAIALVFGLLVLRFP), 161-181 (IAFGGGVLGTIVFLIFIYVVV), 197-217 (LAAGATAFVMGAYTLIAFWQF), 238-258 (IAVLAAGGLGATLGFLWWNAA), 262-282 (IFMGDTGSLALGGLVAGISVV), 290-310 (VIIGALFVIEVASVAIQIAVF), and 341-361 (FWLIAIMAVIAGMAVFYGDWL).

Belongs to the glycosyltransferase 4 family. MraY subfamily. Requires Mg(2+) as cofactor.

Its subcellular location is the cell membrane. It catalyses the reaction UDP-N-acetyl-alpha-D-muramoyl-L-alanyl-gamma-D-glutamyl-meso-2,6-diaminopimeloyl-D-alanyl-D-alanine + di-trans,octa-cis-undecaprenyl phosphate = di-trans,octa-cis-undecaprenyl diphospho-N-acetyl-alpha-D-muramoyl-L-alanyl-D-glutamyl-meso-2,6-diaminopimeloyl-D-alanyl-D-alanine + UMP. Its pathway is cell wall biogenesis; peptidoglycan biosynthesis. Functionally, catalyzes the initial step of the lipid cycle reactions in the biosynthesis of the cell wall peptidoglycan: transfers peptidoglycan precursor phospho-MurNAc-pentapeptide from UDP-MurNAc-pentapeptide onto the lipid carrier undecaprenyl phosphate, yielding undecaprenyl-pyrophosphoryl-MurNAc-pentapeptide, known as lipid I. The chain is Phospho-N-acetylmuramoyl-pentapeptide-transferase from Corynebacterium efficiens (strain DSM 44549 / YS-314 / AJ 12310 / JCM 11189 / NBRC 100395).